Consider the following 661-residue polypeptide: Threonine--tRNA ligase (661 aa).

The 64-residue stretch at 1–64 (MSQAISLTFP…TTGRIEIITR (64 aa)) folds into the TGS domain. The catalytic stretch occupies residues 245-546 (DHRRLGREMD…LIENFAGHMP (302 aa)). Zn(2+) is bound by residues Cys341, His392, and His523.

Belongs to the class-II aminoacyl-tRNA synthetase family. As to quaternary structure, homodimer. It depends on Zn(2+) as a cofactor.

The protein localises to the cytoplasm. It carries out the reaction tRNA(Thr) + L-threonine + ATP = L-threonyl-tRNA(Thr) + AMP + diphosphate + H(+). Its function is as follows. Catalyzes the attachment of threonine to tRNA(Thr) in a two-step reaction: L-threonine is first activated by ATP to form Thr-AMP and then transferred to the acceptor end of tRNA(Thr). Also edits incorrectly charged L-seryl-tRNA(Thr). In Rhizobium johnstonii (strain DSM 114642 / LMG 32736 / 3841) (Rhizobium leguminosarum bv. viciae), this protein is Threonine--tRNA ligase.